The chain runs to 130 residues: Small ribosomal subunit protein uS8A (130 aa).

The protein belongs to the universal ribosomal protein uS8 family. In terms of assembly, component of the small ribosomal subunit (SSU). Mature yeast ribosomes consist of a small (40S) and a large (60S) subunit. The 40S small subunit contains 1 molecule of ribosomal RNA (18S rRNA) and 33 different proteins (encoded by 57 genes). The large 60S subunit contains 3 rRNA molecules (25S, 5.8S and 5S rRNA) and 46 different proteins (encoded by 81 genes).

The protein resides in the cytoplasm. Functionally, component of the ribosome, a large ribonucleoprotein complex responsible for the synthesis of proteins in the cell. The small ribosomal subunit (SSU) binds messenger RNAs (mRNAs) and translates the encoded message by selecting cognate aminoacyl-transfer RNA (tRNA) molecules. The large subunit (LSU) contains the ribosomal catalytic site termed the peptidyl transferase center (PTC), which catalyzes the formation of peptide bonds, thereby polymerizing the amino acids delivered by tRNAs into a polypeptide chain. The nascent polypeptides leave the ribosome through a tunnel in the LSU and interact with protein factors that function in enzymatic processing, targeting, and the membrane insertion of nascent chains at the exit of the ribosomal tunnel. The protein is Small ribosomal subunit protein uS8A of Saccharomyces cerevisiae (strain ATCC 204508 / S288c) (Baker's yeast).